Reading from the N-terminus, the 1067-residue chain is Myocardin-related transcription factor B (1067 aa).

RPEL repeat units lie at residues 46 to 71 (EVLQ…PPLK), 90 to 115 (NFLK…EETL), and 134 to 159 (DDLN…PVDL). Disordered regions lie at residues 175–223 (NLDT…NTTI) and 249–286 (PLSC…PRVK). Composition is skewed to polar residues over residues 193-203 (QPASQESQGSA) and 212-223 (SDSSSPVSNTTI). Residues 268–283 (KHTEKPRSKKSKDPKP) show a composition bias toward basic and acidic residues. Positions 390-424 (LDDMKVAELKMELKLRGLPVSGTKMDLIERLKPFQ) constitute an SAP domain. The stretch at 540-594 (GNTPNVELDAVEKDRKLQEKEKQIEELKRKLEQEQKLVEVLKKQLELEKRGQQQQ) forms a coiled coil. Over residues 799 to 819 (ISTSAQPQRSTQLTAVQNGPT) the composition is skewed to polar residues. Positions 799–829 (ISTSAQPQRSTQLTAVQNGPTSLHEKSSTPP) are disordered.

Interacts with SRF.

It is found in the nucleus. Functionally, poor transcriptional factor which uses the canonical single or multiple CArG boxes DNA sequence. Acts as a cofactor of serum response factor (SRF) with the potential to modulate SRF target genes. The protein is Myocardin-related transcription factor B (mrtfb) of Xenopus laevis (African clawed frog).